Here is a 247-residue protein sequence, read N- to C-terminus: ATP synthase subunit a, chloroplastic (247 aa).

A run of 5 helical transmembrane segments spans residues 38 to 58 (QVLITSWVVIAILLGSATIAV), 95 to 115 (VPFIGTMFLFIFVSNWSGALL), 134 to 154 (INTTVALALPTSMAYFYAGFT), 199 to 219 (LVVVVLVSLVPSVVPIPVMFL), and 220 to 240 (GLFTSGIQALIFATLAAAYIG).

It belongs to the ATPase A chain family. In terms of assembly, F-type ATPases have 2 components, CF(1) - the catalytic core - and CF(0) - the membrane proton channel. CF(1) has five subunits: alpha(3), beta(3), gamma(1), delta(1), epsilon(1). CF(0) has four main subunits: a, b, b' and c.

It localises to the plastid. Its subcellular location is the chloroplast thylakoid membrane. Key component of the proton channel; it plays a direct role in the translocation of protons across the membrane. The sequence is that of ATP synthase subunit a, chloroplastic from Liriodendron tulipifera (Tuliptree).